Here is a 179-residue protein sequence, read N- to C-terminus: MARLKDYYQKELVAKLKTELGLDNIMEVPAIKKITLNMGVGDAAKDKKIMTFALNDLTAIAGQKPVVTKSKKSIAGFKIRDGWPIGAKVTLRGDRMYEFLDRLITIAIPRIRDFRGLSAKSFDGRGNYSLGMREQISFPEIDYDKVDSIRGLDISITTTAKNDDQGRALLKAFGFPFKS.

This sequence belongs to the universal ribosomal protein uL5 family. In terms of assembly, part of the 50S ribosomal subunit; part of the 5S rRNA/L5/L18/L25 subcomplex. Contacts the 5S rRNA and the P site tRNA. Forms a bridge to the 30S subunit in the 70S ribosome.

Functionally, this is one of the proteins that bind and probably mediate the attachment of the 5S RNA into the large ribosomal subunit, where it forms part of the central protuberance. In the 70S ribosome it contacts protein S13 of the 30S subunit (bridge B1b), connecting the 2 subunits; this bridge is implicated in subunit movement. Contacts the P site tRNA; the 5S rRNA and some of its associated proteins might help stabilize positioning of ribosome-bound tRNAs. The chain is Large ribosomal subunit protein uL5 from Francisella tularensis subsp. novicida (strain U112).